The chain runs to 526 residues: ATP synthase subunit alpha (526 aa).

174 to 181 provides a ligand contact to ATP; it reads GDRKTGKT. A compositionally biased stretch (basic and acidic residues) spans 505–520; that stretch reads FEPARSEVKVETRPQE. Positions 505 to 526 are disordered; the sequence is FEPARSEVKVETRPQEEEGEEG.

This sequence belongs to the ATPase alpha/beta chains family. F-type ATPases have 2 components, CF(1) - the catalytic core - and CF(0) - the membrane proton channel. CF(1) has five subunits: alpha(3), beta(3), gamma(1), delta(1), epsilon(1). CF(0) has three main subunits: a(1), b(2) and c(9-12). The alpha and beta chains form an alternating ring which encloses part of the gamma chain. CF(1) is attached to CF(0) by a central stalk formed by the gamma and epsilon chains, while a peripheral stalk is formed by the delta and b chains.

Its subcellular location is the cell membrane. The enzyme catalyses ATP + H2O + 4 H(+)(in) = ADP + phosphate + 5 H(+)(out). In terms of biological role, produces ATP from ADP in the presence of a proton gradient across the membrane. The alpha chain is a regulatory subunit. This chain is ATP synthase subunit alpha, found in Rubrobacter xylanophilus (strain DSM 9941 / JCM 11954 / NBRC 16129 / PRD-1).